A 116-amino-acid polypeptide reads, in one-letter code: Fluoride-specific ion channel FluC 1 (116 aa).

4 helical membrane-spanning segments follow: residues 1 to 21, 32 to 52, 54 to 74, and 93 to 113; these read MYAPLFVAIGGFFGAMARYLV, FPLGTLIVNLLGSFLLGWLAG, GAADAAKLLVGTGFMGAFTTF, and VVVYLAATYLCGVWLAWLGYH. The Na(+) site is built by G69 and T72.

This sequence belongs to the fluoride channel Fluc/FEX (TC 1.A.43) family.

It localises to the cell membrane. The enzyme catalyses fluoride(in) = fluoride(out). Its activity is regulated as follows. Na(+) is not transported, but it plays an essential structural role and its presence is essential for fluoride channel function. In terms of biological role, fluoride-specific ion channel. Important for reducing fluoride concentration in the cell, thus reducing its toxicity. The protein is Fluoride-specific ion channel FluC 1 of Geobacillus kaustophilus (strain HTA426).